A 434-amino-acid chain; its full sequence is Histidinol dehydrogenase (434 aa).

NAD(+) is bound by residues tyrosine 130, glutamine 188, and asparagine 211. Serine 237, glutamine 259, and histidine 262 together coordinate substrate. Glutamine 259 and histidine 262 together coordinate Zn(2+). Active-site proton acceptor residues include glutamate 326 and histidine 327. Residues histidine 327, aspartate 360, glutamate 414, and histidine 419 each coordinate substrate. Residue aspartate 360 participates in Zn(2+) binding. Histidine 419 provides a ligand contact to Zn(2+).

It belongs to the histidinol dehydrogenase family. Homodimer. The cofactor is Zn(2+).

The enzyme catalyses L-histidinol + 2 NAD(+) + H2O = L-histidine + 2 NADH + 3 H(+). It participates in amino-acid biosynthesis; L-histidine biosynthesis; L-histidine from 5-phospho-alpha-D-ribose 1-diphosphate: step 9/9. Catalyzes the sequential NAD-dependent oxidations of L-histidinol to L-histidinaldehyde and then to L-histidine. The sequence is that of Histidinol dehydrogenase from Escherichia coli O6:H1 (strain CFT073 / ATCC 700928 / UPEC).